The following is a 371-amino-acid chain: Mitogen-activated protein kinase homolog NTF6 (371 aa).

The region spanning 38 to 324 is the Protein kinase domain; the sequence is IPPIQPVGRG…VEDALNHPFL (287 aa). ATP-binding positions include 44-52 and Lys-67; that span reads VGRGAYGMV. Residue Asp-164 is the Proton acceptor of the active site. Thr-196 is modified (phosphothreonine). The short motif at 196-198 is the TXY element; that stretch reads TEY. Tyr-198 is modified (phosphotyrosine).

It belongs to the protein kinase superfamily. CMGC Ser/Thr protein kinase family. MAP kinase subfamily. It depends on Mg(2+) as a cofactor. Post-translationally, dually phosphorylated on Thr-196 and Tyr-198, which activates the enzyme. Very low autophosphorylation, although dramatically increased when Mn(2+) is added to the reaction instead of Mg(2+).

It catalyses the reaction L-seryl-[protein] + ATP = O-phospho-L-seryl-[protein] + ADP + H(+). The enzyme catalyses L-threonyl-[protein] + ATP = O-phospho-L-threonyl-[protein] + ADP + H(+). With respect to regulation, activated by tyrosine and threonine phosphorylation. This is Mitogen-activated protein kinase homolog NTF6 (NTF6) from Nicotiana tabacum (Common tobacco).